Consider the following 210-residue polypeptide: Cell division protein FtsQ (210 aa).

One can recognise a POTRA domain in the interval Leu-1–Arg-58. A helical membrane pass occupies residues Val-8–Ile-25.

This sequence belongs to the FtsQ/DivIB family. FtsQ subfamily.

Its subcellular location is the cell inner membrane. Functionally, essential cell division protein. This is Cell division protein FtsQ from Rhizobium radiobacter (Agrobacterium tumefaciens).